We begin with the raw amino-acid sequence, 403 residues long: Metacaspase-7 (403 aa).

Active-site residues include H86 and C139. C139 bears the S-nitrosocysteine mark.

Belongs to the peptidase C14B family. In terms of processing, proteolytically processed; by an autocatalytic mechanism. Expressed in roots, flowers and siliques.

This Arabidopsis thaliana (Mouse-ear cress) protein is Metacaspase-7 (AMC7).